A 137-amino-acid polypeptide reads, in one-letter code: MPESTGLIAHNWGFAIFLLGVVGLCAFMLGLSSLLGSKAWGRSKNEPFESGMLPTGSARLRLSAKFYLVAMLFVIFDIEALFLFAWSVSVRESGWTGFVEALVFIAILLAGLVYLWRVGALDWAPEGRRNRQAKLKQ.

3 helical membrane-spanning segments follow: residues 12–32 (WGFAIFLLGVVGLCAFMLGLS), 66–86 (FYLVAMLFVIFDIEALFLFAW), and 95–115 (WTGFVEALVFIAILLAGLVYL).

Belongs to the complex I subunit 3 family. In terms of assembly, NDH-1 is composed of 13 different subunits. Subunits NuoA, H, J, K, L, M, N constitute the membrane sector of the complex.

It is found in the cell inner membrane. The catalysed reaction is a quinone + NADH + 5 H(+)(in) = a quinol + NAD(+) + 4 H(+)(out). NDH-1 shuttles electrons from NADH, via FMN and iron-sulfur (Fe-S) centers, to quinones in the respiratory chain. The immediate electron acceptor for the enzyme in this species is believed to be ubiquinone. Couples the redox reaction to proton translocation (for every two electrons transferred, four hydrogen ions are translocated across the cytoplasmic membrane), and thus conserves the redox energy in a proton gradient. This Pseudomonas savastanoi pv. phaseolicola (strain 1448A / Race 6) (Pseudomonas syringae pv. phaseolicola (strain 1448A / Race 6)) protein is NADH-quinone oxidoreductase subunit A.